The following is a 659-amino-acid chain: DNA ligase (659 aa).

NAD(+) is bound by residues 32 to 36 (DAEYD), 81 to 82 (SL), and E110. Catalysis depends on K112, which acts as the N6-AMP-lysine intermediate. R133, E168, K284, and K308 together coordinate NAD(+). Positions 402, 405, 420, and 425 each coordinate Zn(2+). In terms of domain architecture, BRCT spans 582–659 (AKPQIFAGKS…SEEEFAELLP (78 aa)).

It belongs to the NAD-dependent DNA ligase family. LigA subfamily. The cofactor is Mg(2+). Requires Mn(2+) as cofactor.

The catalysed reaction is NAD(+) + (deoxyribonucleotide)n-3'-hydroxyl + 5'-phospho-(deoxyribonucleotide)m = (deoxyribonucleotide)n+m + AMP + beta-nicotinamide D-nucleotide.. DNA ligase that catalyzes the formation of phosphodiester linkages between 5'-phosphoryl and 3'-hydroxyl groups in double-stranded DNA using NAD as a coenzyme and as the energy source for the reaction. It is essential for DNA replication and repair of damaged DNA. The chain is DNA ligase from Desulfitobacterium hafniense (strain Y51).